A 240-amino-acid polypeptide reads, in one-letter code: Ribonuclease 3 (240 aa).

Residues 9–141 form the RNase III domain; that stretch reads VEEFQKKTGI…LLAAIYLDQG (133 aa). Glutamate 54 provides a ligand contact to Mg(2+). The active site involves aspartate 58. Positions 127 and 130 each coordinate Mg(2+). Residue glutamate 130 is part of the active site. In terms of domain architecture, DRBM spans 168–237; it reads DYKTALQEIV…ARIAYEKLLK (70 aa).

It belongs to the ribonuclease III family. In terms of assembly, homodimer. The cofactor is Mg(2+).

Its subcellular location is the cytoplasm. The enzyme catalyses Endonucleolytic cleavage to 5'-phosphomonoester.. Functionally, digests double-stranded RNA. Involved in the processing of primary rRNA transcript to yield the immediate precursors to the large and small rRNAs (23S and 16S). Processes some mRNAs, and tRNAs when they are encoded in the rRNA operon. Processes pre-crRNA and tracrRNA of type II CRISPR loci if present in the organism. The sequence is that of Ribonuclease 3 from Thermotoga petrophila (strain ATCC BAA-488 / DSM 13995 / JCM 10881 / RKU-1).